A 592-amino-acid polypeptide reads, in one-letter code: Aspartate--tRNA(Asp/Asn) ligase (592 aa).

E177 contacts L-aspartate. An aspartate region spans residues 201 to 204 (QLFK). Residue R223 coordinates L-aspartate. Residues 223 to 225 (RDE) and Q232 contribute to the ATP site. H451 is an L-aspartate binding site. E485 lines the ATP pocket. L-aspartate is bound at residue R492. 537 to 540 (GLDR) serves as a coordination point for ATP.

It belongs to the class-II aminoacyl-tRNA synthetase family. Type 1 subfamily. In terms of assembly, homodimer.

It is found in the cytoplasm. It carries out the reaction tRNA(Asx) + L-aspartate + ATP = L-aspartyl-tRNA(Asx) + AMP + diphosphate. Its function is as follows. Aspartyl-tRNA synthetase with relaxed tRNA specificity since it is able to aspartylate not only its cognate tRNA(Asp) but also tRNA(Asn). Reaction proceeds in two steps: L-aspartate is first activated by ATP to form Asp-AMP and then transferred to the acceptor end of tRNA(Asp/Asn). In Bacillus subtilis (strain 168), this protein is Aspartate--tRNA(Asp/Asn) ligase.